The following is a 69-amino-acid chain: ATP synthase F(0) complex subunit e, mitochondrial (69 aa).

N6-acetyllysine is present on lysine 34.

Belongs to the ATPase e subunit family. As to quaternary structure, component of the ATP synthase complex composed at least of ATP5F1A/subunit alpha, ATP5F1B/subunit beta, ATP5MC1/subunit c (homooctomer), MT-ATP6/subunit a, MT-ATP8/subunit 8, ATP5ME/subunit e, ATP5MF/subunit f, ATP5MG/subunit g, ATP5MK/subunit k, ATP5MJ/subunit j, ATP5F1C/subunit gamma, ATP5F1D/subunit delta, ATP5F1E/subunit epsilon, ATP5PF/subunit F6, ATP5PB/subunit b, ATP5PD/subunit d, ATP5PO/subunit OSCP. ATP synthase complex consists of a soluble F(1) head domain (subunits alpha(3) and beta(3)) - the catalytic core - and a membrane F(0) domain - the membrane proton channel (subunits c, a, 8, e, f, g, k and j). These two domains are linked by a central stalk (subunits gamma, delta, and epsilon) rotating inside the F1 region and a stationary peripheral stalk (subunits F6, b, d, and OSCP).

It localises to the mitochondrion. The protein localises to the mitochondrion inner membrane. Subunit e, of the mitochondrial membrane ATP synthase complex (F(1)F(0) ATP synthase or Complex V) that produces ATP from ADP in the presence of a proton gradient across the membrane which is generated by electron transport complexes of the respiratory chain. ATP synthase complex consist of a soluble F(1) head domain - the catalytic core - and a membrane F(1) domain - the membrane proton channel. These two domains are linked by a central stalk rotating inside the F(1) region and a stationary peripheral stalk. During catalysis, ATP synthesis in the catalytic domain of F(1) is coupled via a rotary mechanism of the central stalk subunits to proton translocation. In vivo, can only synthesize ATP although its ATP hydrolase activity can be activated artificially in vitro. Part of the complex F(0) domain. The polypeptide is ATP synthase F(0) complex subunit e, mitochondrial (Cricetulus longicaudatus (Long-tailed dwarf hamster)).